The following is a 214-amino-acid chain: Adenylate kinase (214 aa).

10-15 (GAGKGT) contributes to the ATP binding site. Positions 30 to 59 (STGDMLRAAIKAGTELGKQAKAVIDAGQLV) are NMP. Residues threonine 31, arginine 36, 57–59 (QLV), 85–88 (GFPR), and glutamine 92 contribute to the AMP site. An LID region spans residues 122 to 159 (GRRAHLPSGRTYHVVYNPPKVEGKDDVTGEDLVVRDDD). Residues arginine 123 and 132-133 (TY) each bind ATP. Positions 156 and 167 each coordinate AMP. Lysine 200 lines the ATP pocket.

It belongs to the adenylate kinase family. As to quaternary structure, monomer.

It is found in the cytoplasm. It carries out the reaction AMP + ATP = 2 ADP. The protein operates within purine metabolism; AMP biosynthesis via salvage pathway; AMP from ADP: step 1/1. Catalyzes the reversible transfer of the terminal phosphate group between ATP and AMP. Plays an important role in cellular energy homeostasis and in adenine nucleotide metabolism. The sequence is that of Adenylate kinase from Vibrio campbellii (strain ATCC BAA-1116).